Here is a 221-residue protein sequence, read N- to C-terminus: Urease accessory protein UreG (221 aa).

Residue G19–T26 coordinates GTP.

Belongs to the SIMIBI class G3E GTPase family. UreG subfamily. In terms of assembly, homodimer. UreD, UreF and UreG form a complex that acts as a GTP-hydrolysis-dependent molecular chaperone, activating the urease apoprotein by helping to assemble the nickel containing metallocenter of UreC. The UreE protein probably delivers the nickel.

It localises to the cytoplasm. Its function is as follows. Facilitates the functional incorporation of the urease nickel metallocenter. This process requires GTP hydrolysis, probably effectuated by UreG. The chain is Urease accessory protein UreG from Yersinia enterocolitica serotype O:8 / biotype 1B (strain NCTC 13174 / 8081).